Here is a 285-residue protein sequence, read N- to C-terminus: MFNWVKTAMLMAAITALFIVIGGMIGGSRGMTIALVIALGMNFFSYWFSDKMVLRMYNAQEVDETSAPQFYRMVRELSTRAGLPMPRVYLINEDAPNAFATGRNPEHAAVAATTGILRVLSEREMRGVMAHELSHVKHRDILISTISATMAGAISALANFAMFFGSRDENGRSTNPIAGIAVALLAPIAGALIQMAISRAREFEADRGGAQISGDPQALASALDKIHRYASGIPFPTAEQHPATAQMMIMNPLSGGGIANLFSTHPATEERIARLMEMARTGRFE.

Transmembrane regions (helical) follow at residues 7–27 (TAML…MIGG) and 30–50 (GMTI…WFSD). His131 is a binding site for Zn(2+). Residue Glu132 is part of the active site. A Zn(2+)-binding site is contributed by His135. The next 2 membrane-spanning stretches (helical) occupy residues 141-161 (ILIS…ANFA) and 177-197 (IAGI…QMAI). Residue Glu202 coordinates Zn(2+).

Belongs to the peptidase M48B family. The cofactor is Zn(2+).

It localises to the cell inner membrane. This chain is Protease HtpX homolog, found in Paraburkholderia phytofirmans (strain DSM 17436 / LMG 22146 / PsJN) (Burkholderia phytofirmans).